The chain runs to 421 residues: ATP-dependent RNA helicase RhlB (421 aa).

Residues Gln9–Ala37 carry the Q motif motif. In terms of domain architecture, Helicase ATP-binding spans Leu40–Ile219. ATP is bound at residue Ala53–Thr60. Residues Asp165–Asp168 carry the DEAD box motif. Residues Arg245–Met390 enclose the Helicase C-terminal domain. The segment at Asp392–Gly421 is disordered. Positions Pro402–Pro414 are enriched in low complexity.

It belongs to the DEAD box helicase family. RhlB subfamily. In terms of assembly, component of the RNA degradosome, which is a multiprotein complex involved in RNA processing and mRNA degradation.

The protein localises to the cytoplasm. The catalysed reaction is ATP + H2O = ADP + phosphate + H(+). Functionally, DEAD-box RNA helicase involved in RNA degradation. Has RNA-dependent ATPase activity and unwinds double-stranded RNA. In Escherichia coli O17:K52:H18 (strain UMN026 / ExPEC), this protein is ATP-dependent RNA helicase RhlB.